The primary structure comprises 278 residues: Small ribosomal subunit protein uS3 (278 aa).

A KH type-2 domain is found at 39–107; it reads LRKAISKKYV…KVQLNIVEIS (69 aa). The tract at residues 255-278 is disordered; it reads AEIPAEEKPKRVVKKAENITKEEE.

This sequence belongs to the universal ribosomal protein uS3 family. Part of the 30S ribosomal subunit. Forms a tight complex with proteins S10 and S14.

In terms of biological role, binds the lower part of the 30S subunit head. Binds mRNA in the 70S ribosome, positioning it for translation. This Dehalococcoides mccartyi (strain ATCC BAA-2100 / JCM 16839 / KCTC 5957 / BAV1) protein is Small ribosomal subunit protein uS3.